The sequence spans 206 residues: Bis(5'-adenosyl)-triphosphatase (206 aa).

An HIT domain is found at 3 to 115; that stretch reads KPIYFSKFLV…KINNVGDLIY (113 aa). The Histidine triad motif motif lies at 96–100; it reads HLHTH. Catalysis depends on His-98, which acts as the Tele-AMP-histidine intermediate. The tract at residues 143 to 164 is disordered; the sequence is RQARKNNSTSATVDGDELSQGP.

In terms of assembly, homodimer. Mn(2+) serves as cofactor.

It is found in the cytoplasm. Its subcellular location is the nucleus. It localises to the mitochondrion. The catalysed reaction is P(1),P(3)-bis(5'-adenosyl) triphosphate + H2O = AMP + ADP + 2 H(+). In terms of biological role, cleaves A-5'-PPP-5'A to yield AMP and ADP. Can cleave all dinucleoside polyphosphates, provided the phosphate chain contains at least 3 phosphates and that 1 of the 2 bases composing the nucleotide is a purine. Is most effective on dinucleoside triphosphates. Negatively regulates intracellular dinucleoside polyphosphate levels, which elevate following heat shock. The polypeptide is Bis(5'-adenosyl)-triphosphatase (HNT2) (Saccharomyces cerevisiae (strain RM11-1a) (Baker's yeast)).